The following is a 351-amino-acid chain: Peptide chain release factor 1 (351 aa).

Residue Gln229 is modified to N5-methylglutamine.

It belongs to the prokaryotic/mitochondrial release factor family. Post-translationally, methylated by PrmC. Methylation increases the termination efficiency of RF1.

It is found in the cytoplasm. In terms of biological role, peptide chain release factor 1 directs the termination of translation in response to the peptide chain termination codons UAG and UAA. The protein is Peptide chain release factor 1 of Cereibacter sphaeroides (strain ATCC 17025 / ATH 2.4.3) (Rhodobacter sphaeroides).